The sequence spans 238 residues: Flagellar L-ring protein (238 aa).

Positions 1–17 are cleaved as a signal peptide; it reads MKRRLLAAGCAMLLLSG. C18 carries N-palmitoyl cysteine lipidation. C18 carries S-diacylglycerol cysteine lipidation. Residues 22–50 are disordered; the sequence is RQQPSPVPPVTQPQAYAEPEDTAANPGSL.

It belongs to the FlgH family. In terms of assembly, the basal body constitutes a major portion of the flagellar organelle and consists of four rings (L,P,S, and M) mounted on a central rod.

The protein resides in the cell outer membrane. It localises to the bacterial flagellum basal body. Functionally, assembles around the rod to form the L-ring and probably protects the motor/basal body from shearing forces during rotation. In Nitratidesulfovibrio vulgaris (strain DSM 19637 / Miyazaki F) (Desulfovibrio vulgaris), this protein is Flagellar L-ring protein.